Here is a 158-residue protein sequence, read N- to C-terminus: UPF0178 protein RPA2191 (158 aa).

The protein belongs to the UPF0178 family.

This Rhodopseudomonas palustris (strain ATCC BAA-98 / CGA009) protein is UPF0178 protein RPA2191.